A 326-amino-acid chain; its full sequence is Peroxidase 6 (326 aa).

Residues 1–20 form the signal peptide; sequence MKSFGLCLFILVSSPCLLQA. Asn21 carries N-linked (GlcNAc...) asparagine glycosylation. 4 disulfides stabilise this stretch: Cys31-Cys112, Cys64-Cys69, Cys118-Cys318, and Cys197-Cys228. Residue His62 is the Proton acceptor of the active site. Residues Asp63, Val66, Gly68, Asp70, and Ser72 each coordinate Ca(2+). Asn163 carries an N-linked (GlcNAc...) asparagine glycan. Heme b is bound at residue His190. Thr191 contacts Ca(2+). Residues Asn206 and Asn230 are each glycosylated (N-linked (GlcNAc...) asparagine). Residues Asp242, Thr245, and Asp250 each contribute to the Ca(2+) site. N-linked (GlcNAc...) asparagine glycosylation occurs at Asn274.

Belongs to the peroxidase family. Classical plant (class III) peroxidase subfamily. Heme b is required as a cofactor. Ca(2+) serves as cofactor.

The protein localises to the secreted. The enzyme catalyses 2 a phenolic donor + H2O2 = 2 a phenolic radical donor + 2 H2O. Functionally, removal of H(2)O(2), oxidation of toxic reductants, biosynthesis and degradation of lignin, suberization, auxin catabolism, response to environmental stresses such as wounding, pathogen attack and oxidative stress. These functions might be dependent on each isozyme/isoform in each plant tissue. This chain is Peroxidase 6 (PER6), found in Arabidopsis thaliana (Mouse-ear cress).